The following is a 115-amino-acid chain: Phosphoribosyl-AMP cyclohydrolase (115 aa).

Asp80 provides a ligand contact to Mg(2+). Cys81 contacts Zn(2+). Residues Asp82 and Asp84 each contribute to the Mg(2+) site. Positions 97 and 104 each coordinate Zn(2+).

It belongs to the PRA-CH family. Homodimer. Mg(2+) serves as cofactor. Zn(2+) is required as a cofactor.

It localises to the cytoplasm. The enzyme catalyses 1-(5-phospho-beta-D-ribosyl)-5'-AMP + H2O = 1-(5-phospho-beta-D-ribosyl)-5-[(5-phospho-beta-D-ribosylamino)methylideneamino]imidazole-4-carboxamide. Its pathway is amino-acid biosynthesis; L-histidine biosynthesis; L-histidine from 5-phospho-alpha-D-ribose 1-diphosphate: step 3/9. Its function is as follows. Catalyzes the hydrolysis of the adenine ring of phosphoribosyl-AMP. The protein is Phosphoribosyl-AMP cyclohydrolase of Mycobacterium avium (strain 104).